Here is a 192-residue protein sequence, read N- to C-terminus: Ion-translocating oxidoreductase complex subunit B (192 aa).

Residues 1–26 (MSAVWIAVIAISLLGLIFGLILGYAS) form a hydrophobic region. Residues 32-91 (QDDPVVEKIDELLPQSQCGQCGYPGCRPYAEAVGAQGEKINRCAPGGEAVMLKIAALLNV) enclose the 4Fe-4S domain. Positions 49, 52, 57, 74, 117, 120, 123, 127, 147, 150, 153, and 157 each coordinate [4Fe-4S] cluster. 4Fe-4S ferredoxin-type domains lie at 108–137 (MLAV…GATR) and 138–167 (AMHT…LVPV).

It belongs to the 4Fe4S bacterial-type ferredoxin family. RnfB subfamily. As to quaternary structure, the complex is composed of six subunits: RnfA, RnfB, RnfC, RnfD, RnfE and RnfG. [4Fe-4S] cluster serves as cofactor.

The protein localises to the cell inner membrane. Functionally, part of a membrane-bound complex that couples electron transfer with translocation of ions across the membrane. The polypeptide is Ion-translocating oxidoreductase complex subunit B (Klebsiella pneumoniae (strain 342)).